Consider the following 199-residue polypeptide: Recombination protein RecR (199 aa).

Residues Cys57–Cys72 form a C4-type zinc finger. Residues Ser80 to Ser176 form the Toprim domain.

This sequence belongs to the RecR family.

Its function is as follows. May play a role in DNA repair. It seems to be involved in an RecBC-independent recombinational process of DNA repair. It may act with RecF and RecO. This chain is Recombination protein RecR, found in Lactiplantibacillus plantarum (strain ATCC BAA-793 / NCIMB 8826 / WCFS1) (Lactobacillus plantarum).